We begin with the raw amino-acid sequence, 581 residues long: Prolactin receptor (581 aa).

The signal sequence occupies residues 1-24 (MKENAASRVLFILLLFLFASLLNG). The Extracellular portion of the chain corresponds to 25-237 (QSPPEKPKLI…NDFPVKDTSM (213 aa)). 2 consecutive Fibronectin type-III domains span residues 27 to 127 (PPEK…IVEP) and 129 to 229 (PPVN…IPND). Cys-36 and Cys-46 are disulfide-bonded. Asn-59 is a glycosylation site (N-linked (GlcNAc...) asparagine). Cysteines 75 and 86 form a disulfide. Asn-132 is a glycosylation site (N-linked (GlcNAc...) asparagine). Zn(2+)-binding residues include Asp-211 and His-212. The WSXWS motif signature appears at 215 to 219 (WSEWS). The chain crosses the membrane as a helical span at residues 238-258 (WIFVGVLSAVICLIMVWAVAL). The Cytoplasmic portion of the chain corresponds to 259–581 (KGYSMVTCIL…SAKKAPPALP (323 aa)). A Box 1 motif motif is present at residues 267–275 (ILPPVPGPK). Basic and acidic residues-rich tracts occupy residues 323-349 (QHLM…DTDS) and 375-388 (HIPE…DPET). Disordered stretches follow at residues 323–388 (QHLM…DPET) and 462–492 (FKPS…PDQD).

It belongs to the type I cytokine receptor family. Type 1 subfamily. Interacts with SMARCA1. Interacts with NEK3 and VAV2 and this interaction is prolactin-dependent. Expressed in all tissues examined; liver, pituitary, adrenal gland, ovary and fetal liver.

The protein resides in the membrane. This is a receptor for the anterior pituitary hormone prolactin. This Ovis aries (Sheep) protein is Prolactin receptor (PRLR).